Reading from the N-terminus, the 230-residue chain is Rab15 effector protein (230 aa).

Gly2 carries the N-myristoyl glycine lipid modification.

As to quaternary structure, interacts with the GTP-bound form of RAB15, RAB3A-D and RAB34.

The protein resides in the early endosome membrane. Functionally, effector that interacts with Rab GTPases in their active form (GTP-bound) including RAB15, RAB3A-D and RAB34. Controls downstream signaling such as cell proliferation and cell migration. Also regulates transferrin receptor recycling from the endocytic recycling compartment. The chain is Rab15 effector protein from Mus musculus (Mouse).